We begin with the raw amino-acid sequence, 211 residues long: Uracil phosphoribosyltransferase (211 aa).

5-phospho-alpha-D-ribose 1-diphosphate contacts are provided by residues Arg-78, Arg-103, and 130 to 138 (DPMLATGGT). Uracil is bound by residues Ile-195 and 200-202 (GDA). Asp-201 is a binding site for 5-phospho-alpha-D-ribose 1-diphosphate.

It belongs to the UPRTase family. Requires Mg(2+) as cofactor.

The enzyme catalyses UMP + diphosphate = 5-phospho-alpha-D-ribose 1-diphosphate + uracil. Its pathway is pyrimidine metabolism; UMP biosynthesis via salvage pathway; UMP from uracil: step 1/1. Its activity is regulated as follows. Allosterically activated by GTP. Its function is as follows. Catalyzes the conversion of uracil and 5-phospho-alpha-D-ribose 1-diphosphate (PRPP) to UMP and diphosphate. The chain is Uracil phosphoribosyltransferase from Paenarthrobacter aurescens (strain TC1).